Here is a 163-residue protein sequence, read N- to C-terminus: uncharacterized protein (163 aa).

The tract at residues Trp144–Phe163 is disordered. Residues Pro154–Phe163 are compositionally biased toward gly residues.

This is an uncharacterized protein from Homo sapiens (Human).